Here is an 830-residue protein sequence, read N- to C-terminus: MKVSRRKFIKAQAVASAAAAAGISIPISASNVVTDSSLTKITWEKAPCRFCGTGCSVNVGTKEGKVVATHGDIKSPVNRGLNCVKGYFLSKIMYGKDRLTQPLLRMTDGKFDKNGEFSPISWDQAFDIMAEKWKKTLKEKGPEAIGMFGSGQWTIYDGYAASKLMKAGFRSNNLEPNARHCMASAVVGFIRTFGIDEPMGCYDDIEAADAFVLWGSNMVEMHPILWTRVTDRRLSVPGVKVSVLSTFEHRSFELADIPIIFTPQSDLAILNFIANYIITNDKVNKDFTSKHVNFRRGTTDIGYGLRPEHPLQQAAKNPDSGDSTPMTFEEFKAFVSEYTVEKASEISGVKPDKLIELAELYANPETKVVSFWTMGFNQHTRGVWCNNLVYNIHLLTGKISTPGNSPFSLTGQPSACGTAREVGTFAHRLPADLVVTNPEHRKIAEKIWKLPDGTIPGKVGAHAVLQSRMLKDGKINAYWIQVNNNLQAGANINEETLPGYRNPDNFIVVSEAYPTVTSQAADLVLPTAMWVEKEGGFGNAERRTQLWHQMVEAPGESKPDLWQLMEFSKRFKTDEVWPKELLDSNPDYKGKTLFDVLFINGNVNKYPLDDLAEGTLNDESNYYGFYVHKGLFEEYAEFGRGHGHDLAPFDMYHETRGLRWPVVDGKETLWRYREGSDPYVKEGAGFEFYGKPDGKAIIFALPYEPAAESPDEEYDMWLSTGRVIEHWHSGSMTQRVPELYKAYPDAQVFMHPDDAKSRGLRRGDAVKVMSRRGEIITRVETRGRNKPPIGLVFVPWFDASQLINKVTLDATDPLSKQTDFKKCAVKIVKA.

The segment at residues 1–31 (MKVSRRKFIKAQAVASAAAAAGISIPISASN) is a signal peptide (tat-type signal). Residues 41 to 97 (ITWEKAPCRFCGTGCSVNVGTKEGKVVATHGDIKSPVNRGLNCVKGYFLSKIMYGKD) form the 4Fe-4S Mo/W bis-MGD-type domain. 4 residues coordinate [4Fe-4S] cluster: Cys48, Cys51, Cys55, and Cys83. Residues Lys85, Gln152, Asn177, Cys181, 245 to 249 (STFEH), 264 to 266 (QSD), Met374, Gln378, Asn484, 510 to 511 (SE), Lys533, Asp560, and 720 to 729 (TGRVIEHWHS) contribute to the Mo-bis(molybdopterin guanine dinucleotide) site. Trp796 contributes to the substrate binding site. Positions 804 and 821 each coordinate Mo-bis(molybdopterin guanine dinucleotide).

The protein belongs to the prokaryotic molybdopterin-containing oxidoreductase family. NasA/NapA/NarB subfamily. In terms of assembly, component of the periplasmic nitrate reductase NapAB complex composed of NapA and NapB. The cofactor is [4Fe-4S] cluster. It depends on Mo-bis(molybdopterin guanine dinucleotide) as a cofactor. In terms of processing, predicted to be exported by the Tat system. The position of the signal peptide cleavage has not been experimentally proven.

It localises to the periplasm. It carries out the reaction 2 Fe(II)-[cytochrome] + nitrate + 2 H(+) = 2 Fe(III)-[cytochrome] + nitrite + H2O. Functionally, catalytic subunit of the periplasmic nitrate reductase complex NapAB. Receives electrons from NapB and catalyzes the reduction of nitrate to nitrite. The sequence is that of Periplasmic nitrate reductase 2 from Photobacterium profundum (strain SS9).